Consider the following 193-residue polypeptide: Large ribosomal subunit protein bL25 (193 aa).

It belongs to the bacterial ribosomal protein bL25 family. CTC subfamily. Part of the 50S ribosomal subunit; part of the 5S rRNA/L5/L18/L25 subcomplex. Contacts the 5S rRNA. Binds to the 5S rRNA independently of L5 and L18.

Its function is as follows. This is one of the proteins that binds to the 5S RNA in the ribosome where it forms part of the central protuberance. This Clostridium tetani (strain Massachusetts / E88) protein is Large ribosomal subunit protein bL25.